Consider the following 493-residue polypeptide: Alcohol-forming fatty acyl-CoA reductase (493 aa).

The protein belongs to the fatty acyl-CoA reductase family.

The catalysed reaction is a long-chain fatty acyl-CoA + 2 NADPH + 2 H(+) = a long-chain primary fatty alcohol + 2 NADP(+) + CoA. In terms of biological role, NADPH-dependent alcohol-forming fatty acyl-coenzyme A reductase that catalyzes the reduction of fatty acyl-CoA to fatty alcohols. The recombinant enzyme accepts saturated and mono-unsaturated fatty acyl-CoAs of 16 to 22 carbons. The protein is Alcohol-forming fatty acyl-CoA reductase of Simmondsia chinensis (Jojoba).